Consider the following 354-residue polypeptide: Vanillate O-demethylase oxygenase subunit (354 aa).

A Rieske domain is found at 7 to 107 (WYVACTPDEI…VEERYGFIWV (101 aa)). Residues C47, H49, C66, and H69 each contribute to the [2Fe-2S] cluster site.

The protein belongs to the bacterial ring-hydroxylating dioxygenase alpha subunit family. In terms of assembly, this demethylase system consists of two proteins: an oxygenase and an oxygenase reductase. The cofactor is [2Fe-2S] cluster. Fe cation is required as a cofactor.

The enzyme catalyses vanillate + NADH + O2 + H(+) = 3,4-dihydroxybenzoate + formaldehyde + NAD(+) + H2O. It participates in xenobiotic degradation; vanillyl-alcohol degradation. This Pseudomonas sp. (strain HR199 / DSM 7063) protein is Vanillate O-demethylase oxygenase subunit (vanA).